Here is a 769-residue protein sequence, read N- to C-terminus: Portal protein (769 aa).

The tract at residues 458–479 (LEGYVNNLFKTIEGLKDVNSDL) is putative leucine zipper motif. 2 disordered regions span residues 654-675 (RGPRRTPSPSWGLPDPTEDDER) and 750-769 (RQLTNTSRRGVGCERRDRRS). Over residues 760–769 (VGCERRDRRS) the composition is skewed to basic and acidic residues.

It belongs to the herpesviridae portal protein family. Homododecamerizes. Interacts with terminase subunits TRM1 and TRM3.

It localises to the virion. It is found in the host nucleus. Functionally, forms a portal in the viral capsid through which viral DNA is translocated during DNA packaging. Assembles as a dodecamer at a single fivefold axe of the T=16 icosahedric capsid. Binds to the molecular motor that translocates the viral DNA, termed terminase. This chain is Portal protein (54), found in Homo sapiens (Human).